The sequence spans 577 residues: Arginine--tRNA ligase (577 aa).

A 'HIGH' region motif is present at residues 132-142 (ANPTGPLHVGH).

Belongs to the class-I aminoacyl-tRNA synthetase family. In terms of assembly, monomer.

The protein localises to the cytoplasm. The catalysed reaction is tRNA(Arg) + L-arginine + ATP = L-arginyl-tRNA(Arg) + AMP + diphosphate. This Janthinobacterium sp. (strain Marseille) (Minibacterium massiliensis) protein is Arginine--tRNA ligase.